Here is a 104-residue protein sequence, read N- to C-terminus: Protein RnfH (104 aa).

It belongs to the UPF0125 (RnfH) family.

This chain is Protein RnfH, found in Pseudomonas fluorescens (strain Pf0-1).